The following is a 114-amino-acid chain: Anti-adapter protein IraM (114 aa).

The protein belongs to the IraM/RssC family.

It is found in the cytoplasm. Its function is as follows. Involved in the stabilization of the sigma stress factor RpoS. This chain is Anti-adapter protein IraM, found in Citrobacter koseri (strain ATCC BAA-895 / CDC 4225-83 / SGSC4696).